The following is a 120-amino-acid chain: NAD(P)H-quinone oxidoreductase subunit 3, chloroplastic (120 aa).

The next 3 helical transmembrane spans lie at 9–29, 64–84, and 88–108; these read FFWA…FISG, MFAL…PWAM, and VLGV…IIGL.

Belongs to the complex I subunit 3 family. NDH is composed of at least 16 different subunits, 5 of which are encoded in the nucleus.

It is found in the plastid. The protein resides in the chloroplast thylakoid membrane. It carries out the reaction a plastoquinone + NADH + (n+1) H(+)(in) = a plastoquinol + NAD(+) + n H(+)(out). The enzyme catalyses a plastoquinone + NADPH + (n+1) H(+)(in) = a plastoquinol + NADP(+) + n H(+)(out). Functionally, NDH shuttles electrons from NAD(P)H:plastoquinone, via FMN and iron-sulfur (Fe-S) centers, to quinones in the photosynthetic chain and possibly in a chloroplast respiratory chain. The immediate electron acceptor for the enzyme in this species is believed to be plastoquinone. Couples the redox reaction to proton translocation, and thus conserves the redox energy in a proton gradient. The chain is NAD(P)H-quinone oxidoreductase subunit 3, chloroplastic from Atropa belladonna (Belladonna).